A 300-amino-acid polypeptide reads, in one-letter code: Protoheme IX farnesyltransferase (300 aa).

9 helical membrane-spanning segments follow: residues 21 to 43 (PRVVELLLLTTVPTMILAQRGVP), 45 to 65 (PLSVLSVLLGGAMSAGAAGAF), 94 to 114 (ASLIFAWMLCVISVLWFLLFV), 117 to 137 (LSALLSAIAVFLYAFFYSIVL), 145 to 167 (IVWGGLAGCMPVLIAWAAVTGSI), 171 to 193 (AIVLFAVVFLWTPPHYWPLSIHY), 213 to 233 (LVVLQVLLYAFAVVACTLLLI), 235 to 255 (VAHMTPLYGLFSAVLGAWFVY), and 272 to 292 (AMHIFSLSNTYLSLVFLSVGI).

It belongs to the UbiA prenyltransferase family. Protoheme IX farnesyltransferase subfamily.

It localises to the cell membrane. The catalysed reaction is heme b + (2E,6E)-farnesyl diphosphate + H2O = Fe(II)-heme o + diphosphate. It functions in the pathway porphyrin-containing compound metabolism; heme O biosynthesis; heme O from protoheme: step 1/1. Converts heme B (protoheme IX) to heme O by substitution of the vinyl group on carbon 2 of heme B porphyrin ring with a hydroxyethyl farnesyl side group. This is Protoheme IX farnesyltransferase from Tropheryma whipplei (strain TW08/27) (Whipple's bacillus).